Here is a 422-residue protein sequence, read N- to C-terminus: Serine--tRNA ligase (422 aa).

229–231 provides a ligand contact to L-serine; sequence TAE. An ATP-binding site is contributed by 260–262; sequence RKE. Position 283 (Glu283) interacts with L-serine. An ATP-binding site is contributed by 347-350; it reads EISS. Residue Ser383 participates in L-serine binding.

The protein belongs to the class-II aminoacyl-tRNA synthetase family. Type-1 seryl-tRNA synthetase subfamily. Homodimer. The tRNA molecule binds across the dimer.

The protein localises to the cytoplasm. It carries out the reaction tRNA(Ser) + L-serine + ATP = L-seryl-tRNA(Ser) + AMP + diphosphate + H(+). It catalyses the reaction tRNA(Sec) + L-serine + ATP = L-seryl-tRNA(Sec) + AMP + diphosphate + H(+). Its pathway is aminoacyl-tRNA biosynthesis; selenocysteinyl-tRNA(Sec) biosynthesis; L-seryl-tRNA(Sec) from L-serine and tRNA(Sec): step 1/1. Functionally, catalyzes the attachment of serine to tRNA(Ser). Is also able to aminoacylate tRNA(Sec) with serine, to form the misacylated tRNA L-seryl-tRNA(Sec), which will be further converted into selenocysteinyl-tRNA(Sec). The polypeptide is Serine--tRNA ligase (Geobacter sp. (strain M21)).